Here is a 289-residue protein sequence, read N- to C-terminus: Iron-sulfur cluster carrier protein (289 aa).

The span at 1 to 18 (MAEECSGNCDSCGSSSDC) shows a compositional bias: low complexity. A disordered region spans residues 1–20 (MAEECSGNCDSCGSSSDCSD). ATP is bound at residue 48 to 55 (GKGGVGKS).

Belongs to the Mrp/NBP35 ATP-binding proteins family. In terms of assembly, homodimer.

Functionally, binds and transfers iron-sulfur (Fe-S) clusters to target apoproteins. Can hydrolyze ATP. The sequence is that of Iron-sulfur cluster carrier protein from Methanococcus maripaludis (strain DSM 14266 / JCM 13030 / NBRC 101832 / S2 / LL).